Consider the following 308-residue polypeptide: Glutaminase (308 aa).

The substrate site is built by serine 66, asparagine 117, glutamate 161, asparagine 168, tyrosine 192, tyrosine 244, and valine 262.

This sequence belongs to the glutaminase family. As to quaternary structure, homotetramer.

The enzyme catalyses L-glutamine + H2O = L-glutamate + NH4(+). In Proteus mirabilis (strain HI4320), this protein is Glutaminase.